We begin with the raw amino-acid sequence, 981 residues long: Ubiquitin carboxyl-terminal hydrolase 15 (981 aa).

Alanine 2 is subject to N-acetylalanine. The mediates interaction with SART3 stretch occupies residues 2 to 223 (AEGGAADLDT…KNEDGTWPRG (222 aa)). In terms of domain architecture, DUSP spans 7 to 118 (ADLDTQRSDI…GQEPIARKVV (112 aa)). The segment at 216–237 (EDGTWPRGPSTPKSPGASNFST) is disordered. Threonine 226 carries the phosphothreonine modification. Polar residues predominate over residues 226–237 (TPKSPGASNFST). Residues serine 229 and serine 242 each carry the phosphoserine modification. One can recognise a USP domain in the interval 289–933 (CGLSNLGNTC…AAYVLFYQRQ (645 aa)). The active-site Nucleophile is cysteine 298. At threonine 602 the chain carries Phosphothreonine. Positions 633–694 (CCEDQNINGN…GGDNDSENGL (62 aa)) are disordered. Positions 656–673 (METDEPDDESSQDQELPS) are enriched in acidic residues. Catalysis depends on histidine 891, which acts as the Proton acceptor. The segment at 952–981 (SAATGIPLESDEDSNDNDNDLENENCMHTN) is disordered. The span at 960-974 (ESDEDSNDNDNDLEN) shows a compositional bias: acidic residues. Phosphoserine is present on residues serine 961 and serine 965.

This sequence belongs to the peptidase C19 family. As to quaternary structure, a homodimer structure has been reported; however it is unclear whether the protein form a homodimer in vivo. Identified in a complex with the COP9 signalosome complex (CSN). Interacts with SMAD1, SMAD2 and SMAD3; the interaction is direct. Forms a complex with SMURF2 and SMAD7. Interacts with TGFBR1. Interacts with SART3; the interaction is direct. May interact with RNF20 and RNF40. May interact with PRKN. Interacts with INCA1. Phosphorylated. Phosphorylation protects against ubiquitination and subsequent degradation by the proteasome. Post-translationally, ubiquitinated, leading to degradation by the proteasome. As to expression, widely expressed with highest levels in the brain and spleen, and lowest levels in the muscles (at protein level). In the midbrain, strong expression in neurons including the dopaminergic neurons (at protein level). Widely expressed with highest levels in testis, heart and liver.

It is found in the cytoplasm. The protein localises to the nucleus. The protein resides in the mitochondrion. The catalysed reaction is Thiol-dependent hydrolysis of ester, thioester, amide, peptide and isopeptide bonds formed by the C-terminal Gly of ubiquitin (a 76-residue protein attached to proteins as an intracellular targeting signal).. Hydrolase that removes conjugated ubiquitin from target proteins and regulates various pathways such as the TGF-beta receptor signaling, NF-kappa-B and RNF41/NRDP1-PRKN pathways. Acts as a key regulator of TGF-beta receptor signaling pathway, but the precise mechanism is still unclear: according to a report, acts by promoting deubiquitination of monoubiquitinated R-SMADs (SMAD1, SMAD2 and/or SMAD3), thereby alleviating inhibition of R-SMADs and promoting activation of TGF-beta target genes. According to another reports, regulates the TGF-beta receptor signaling pathway by mediating deubiquitination and stabilization of TGFBR1, leading to an enhanced TGF-beta signal. Able to mediate deubiquitination of monoubiquitinated substrates, 'Lys-27'-, 'Lys-48'- and 'Lys-63'-linked polyubiquitin chains. May also regulate gene expression and/or DNA repair through the deubiquitination of histone H2B. Acts as an inhibitor of mitophagy by counteracting the action of parkin (PRKN): hydrolyzes cleavage of 'Lys-48'- and 'Lys-63'-linked polyubiquitin chains attached by parkin on target proteins such as MFN2, thereby reducing parkin's ability to drive mitophagy. Acts as an associated component of COP9 signalosome complex (CSN) and regulates different pathways via this association: regulates NF-kappa-B by mediating deubiquitination of NFKBIA and deubiquitinates substrates bound to VCP. Involved in endosome organization by mediating deubiquitination of SQSTM1: ubiquitinated SQSTM1 forms a molecular bridge that restrains cognate vesicles in the perinuclear region and its deubiquitination releases target vesicles for fast transport into the cell periphery. Acts as a negative regulator of antifungal immunity by mediating 'Lys-27'-linked deubiquitination of CARD9, thereby inactivating CARD9. In Mus musculus (Mouse), this protein is Ubiquitin carboxyl-terminal hydrolase 15 (Usp15).